We begin with the raw amino-acid sequence, 518 residues long: ATP synthase subunit alpha (518 aa).

An ATP-binding site is contributed by 170–177; the sequence is GDRQTGKT.

The protein belongs to the ATPase alpha/beta chains family. As to quaternary structure, F-type ATPases have 2 components, CF(1) - the catalytic core - and CF(0) - the membrane proton channel. CF(1) has five subunits: alpha(3), beta(3), gamma(1), delta(1), epsilon(1). CF(0) has three main subunits: a(1), b(2) and c(9-12). The alpha and beta chains form an alternating ring which encloses part of the gamma chain. CF(1) is attached to CF(0) by a central stalk formed by the gamma and epsilon chains, while a peripheral stalk is formed by the delta and b chains.

The protein resides in the cell membrane. It catalyses the reaction ATP + H2O + 4 H(+)(in) = ADP + phosphate + 5 H(+)(out). Produces ATP from ADP in the presence of a proton gradient across the membrane. The alpha chain is a regulatory subunit. The protein is ATP synthase subunit alpha of Mycoplasmoides gallisepticum (strain R(low / passage 15 / clone 2)) (Mycoplasma gallisepticum).